A 159-amino-acid polypeptide reads, in one-letter code: Endoribonuclease YbeY (159 aa).

Positions 124, 128, and 134 each coordinate Zn(2+).

Belongs to the endoribonuclease YbeY family. Requires Zn(2+) as cofactor.

The protein localises to the cytoplasm. In terms of biological role, single strand-specific metallo-endoribonuclease involved in late-stage 70S ribosome quality control and in maturation of the 3' terminus of the 16S rRNA. This Halalkalibacterium halodurans (strain ATCC BAA-125 / DSM 18197 / FERM 7344 / JCM 9153 / C-125) (Bacillus halodurans) protein is Endoribonuclease YbeY.